The chain runs to 387 residues: 3-ketoacyl-CoA thiolase (387 aa).

Residue Cys-91 is the Acyl-thioester intermediate of the active site. Active-site proton acceptor residues include His-343 and Cys-373.

It belongs to the thiolase-like superfamily. Thiolase family. Heterotetramer of two alpha chains (FadB) and two beta chains (FadA).

It localises to the cytoplasm. It carries out the reaction an acyl-CoA + acetyl-CoA = a 3-oxoacyl-CoA + CoA. Its pathway is lipid metabolism; fatty acid beta-oxidation. Functionally, catalyzes the final step of fatty acid oxidation in which acetyl-CoA is released and the CoA ester of a fatty acid two carbons shorter is formed. The sequence is that of 3-ketoacyl-CoA thiolase from Shewanella frigidimarina (strain NCIMB 400).